The chain runs to 265 residues: Sulfur carrier protein FdhD (265 aa).

C107 acts as the Cysteine persulfide intermediate in catalysis.

Belongs to the FdhD family.

Its subcellular location is the cytoplasm. In terms of biological role, required for formate dehydrogenase (FDH) activity. Acts as a sulfur carrier protein that transfers sulfur from IscS to the molybdenum cofactor prior to its insertion into FDH. The protein is Sulfur carrier protein FdhD of Staphylococcus aureus (strain MRSA252).